The following is a 205-amino-acid chain: uncharacterized protein (205 aa).

Positions 11-71 constitute an HTH tetR-type domain; it reads DKRQAEILEA…RIIETGLDEG (61 aa). Residues 34–53 constitute a DNA-binding region (H-T-H motif); sequence TMKDVVEESGFSRGGVYLYF.

This is an uncharacterized protein from Bacillus subtilis (strain 168).